The chain runs to 232 residues: MIERRPFDRLGHANHGWLNARHHFSFADYYDPEREDWGRLRVWNDDEIAAGSGFPPHPHRDMEIITYVREGAITHQDSLGNKGRTEAGDVQVMSAGTGIVHSEYNLEAETTRIFQIWIIPDRRGDQPRWGSKPFPKAERDGRFVTLASGDEQDSEALHIRADAEVAAVTLKAGQSAEYALENGRRAYLVPATGSIEVNGVRAEARDGLAVRDEPTLKVTALEDSEVLLVEVA.

A divalent metal cation contacts are provided by H57, H59, H101, and E103.

The protein belongs to the pirin family. It depends on a divalent metal cation as a cofactor.

It carries out the reaction quercetin + O2 = 2-(3,4-dihydroxybenzoyloxy)-4,6-dihydroxybenzoate + CO. It participates in flavonoid metabolism; quercetin degradation. In terms of biological role, putative quercetin 2,3-dioxygenase. The chain is Putative quercetin 2,3-dioxygenase PA1210 from Pseudomonas aeruginosa (strain ATCC 15692 / DSM 22644 / CIP 104116 / JCM 14847 / LMG 12228 / 1C / PRS 101 / PAO1).